A 705-amino-acid polypeptide reads, in one-letter code: Elongation factor G (705 aa).

The tr-type G domain occupies 8-290 (AYYRNIGISA…AVIEYLPAPT (283 aa)). Residues 17–24 (AHIDAGKT), 88–92 (DTPGH), and 142–145 (NKMD) contribute to the GTP site.

It belongs to the TRAFAC class translation factor GTPase superfamily. Classic translation factor GTPase family. EF-G/EF-2 subfamily.

The protein localises to the cytoplasm. Its function is as follows. Catalyzes the GTP-dependent ribosomal translocation step during translation elongation. During this step, the ribosome changes from the pre-translocational (PRE) to the post-translocational (POST) state as the newly formed A-site-bound peptidyl-tRNA and P-site-bound deacylated tRNA move to the P and E sites, respectively. Catalyzes the coordinated movement of the two tRNA molecules, the mRNA and conformational changes in the ribosome. This is Elongation factor G from Baumannia cicadellinicola subsp. Homalodisca coagulata.